A 389-amino-acid polypeptide reads, in one-letter code: Putative zinc finger CCCH domain-containing protein 10 (389 aa).

Residues 1 to 11 are compositionally biased toward polar residues; the sequence is MANVSFTFDSQ. Positions 1 to 110 are disordered; the sequence is MANVSFTFDS…QDRRGSESRM (110 aa). 2 stretches are compositionally biased toward basic and acidic residues: residues 12-52 and 86-110; these read EQNK…RVSE and RSHE…ESRM. 2 consecutive C3H1-type zinc fingers follow at residues 131–157 and 158–190; these read RPGE…YNHP and PLQE…HPKE. The segment at 183 to 296 is disordered; that stretch reads CPFNHPKERD…ATATGKVSGK (114 aa). 2 stretches are compositionally biased toward basic and acidic residues: residues 204-243 and 251-284; these read PDLR…KEDA and RPRD…RSSR.

The protein is Putative zinc finger CCCH domain-containing protein 10 of Arabidopsis thaliana (Mouse-ear cress).